The following is a 204-amino-acid chain: Probable GTP-binding protein EngB (204 aa).

The disordered stretch occupies residues 1–21 (MKVSSAEFVTSGTRPAHYPPP). In terms of domain architecture, EngB-type G spans 22–194 (ELPEVAFAGR…WARIEVMLAA (173 aa)). Residues 30–37 (GRSNVGKS), 57–61 (GRTQL), 75–78 (DLPG), 142–145 (TKCD), and 173–175 (FSA) contribute to the GTP site. The Mg(2+) site is built by S37 and T59.

The protein belongs to the TRAFAC class TrmE-Era-EngA-EngB-Septin-like GTPase superfamily. EngB GTPase family. Requires Mg(2+) as cofactor.

In terms of biological role, necessary for normal cell division and for the maintenance of normal septation. The sequence is that of Probable GTP-binding protein EngB from Geobacter metallireducens (strain ATCC 53774 / DSM 7210 / GS-15).